The following is a 310-amino-acid chain: Oxygen-dependent coproporphyrinogen-III oxidase (310 aa).

Residue serine 97 participates in substrate binding. Histidine 101 and histidine 111 together coordinate a divalent metal cation. Catalysis depends on histidine 111, which acts as the Proton donor. Substrate is bound at residue 113 to 115 (NFR). 2 residues coordinate a divalent metal cation: histidine 150 and histidine 180. Residues 245–280 (YVEFNLLYDRGTRFGLEFGGRTESILMSLPPRVVWR) form an important for dimerization region. 263–265 (GGR) is a binding site for substrate.

The protein belongs to the aerobic coproporphyrinogen-III oxidase family. As to quaternary structure, homodimer. Requires a divalent metal cation as cofactor.

The protein localises to the cytoplasm. The enzyme catalyses coproporphyrinogen III + O2 + 2 H(+) = protoporphyrinogen IX + 2 CO2 + 2 H2O. It functions in the pathway porphyrin-containing compound metabolism; protoporphyrin-IX biosynthesis; protoporphyrinogen-IX from coproporphyrinogen-III (O2 route): step 1/1. Its function is as follows. Involved in the heme biosynthesis. Catalyzes the aerobic oxidative decarboxylation of propionate groups of rings A and B of coproporphyrinogen-III to yield the vinyl groups in protoporphyrinogen-IX. The protein is Oxygen-dependent coproporphyrinogen-III oxidase of Coxiella burnetii (strain RSA 493 / Nine Mile phase I).